A 339-amino-acid polypeptide reads, in one-letter code: Ferrochelatase (339 aa).

Fe cation contacts are provided by His202 and Glu283.

The protein belongs to the ferrochelatase family.

The protein localises to the cytoplasm. It catalyses the reaction heme b + 2 H(+) = protoporphyrin IX + Fe(2+). It participates in porphyrin-containing compound metabolism; protoheme biosynthesis; protoheme from protoporphyrin-IX: step 1/1. In terms of biological role, catalyzes the ferrous insertion into protoporphyrin IX. This is Ferrochelatase from Psychrobacter sp. (strain PRwf-1).